The primary structure comprises 523 residues: Translation initiation factor eIF2B subunit delta (523 aa).

The tract at residues 1–147 (MAAVAVAVRE…PSGVKRLPEY (147 aa)) is disordered. A2 is modified (N-acetylalanine). S12 carries the phosphoserine modification. Positions 30–40 (EMTKEEKLQLR) are enriched in basic and acidic residues. Over residues 41-51 (KEKKQQKKKRK) the composition is skewed to basic residues. T86 bears the Phosphothreonine mark. The span at 87–121 (PREKVPAGRSKAELRAERRAKQEAERALKQARKGE) shows a compositional bias: basic and acidic residues. S130 is subject to Phosphoserine. Residues 170 to 179 (RKDYGSKVSL) form a may bind the chemical integrated stress response (ISR) inhibitor ISRIB region.

This sequence belongs to the eIF-2B alpha/beta/delta subunits family. Component of the translation initiation factor 2B (eIF2B) complex which is a heterodecamer of two sets of five different subunits: alpha, beta, gamma, delta and epsilon. Subunits alpha, beta and delta comprise a regulatory subcomplex and subunits epsilon and gamma comprise a catalytic subcomplex. Within the complex, the hexameric regulatory complex resides at the center, with the two heterodimeric catalytic subcomplexes bound on opposite sides.

The protein localises to the cytoplasm. It localises to the cytosol. With respect to regulation, activated by the chemical integrated stress response (ISR) inhibitor ISRIB which stimulates guanine nucleotide exchange factor activity for both phosphorylated and unphosphorylated eIF2. Acts as a component of the translation initiation factor 2B (eIF2B) complex, which catalyzes the exchange of GDP for GTP on eukaryotic initiation factor 2 (eIF2) gamma subunit. Its guanine nucleotide exchange factor activity is repressed when bound to eIF2 complex phosphorylated on the alpha subunit, thereby limiting the amount of methionyl-initiator methionine tRNA available to the ribosome and consequently global translation is repressed. The protein is Translation initiation factor eIF2B subunit delta (EIF2B4) of Homo sapiens (Human).